A 149-amino-acid polypeptide reads, in one-letter code: Calmodulin (149 aa).

A2 is subject to N-acetylalanine. EF-hand domains are found at residues 8–43, 44–79, 81–116, and 117–149; these read EQIAEFKEAFSLFDKDGDGTITTKELGTVMRSLGQN, PTEAELQDMINEVDADGNGTIDFPEFLTMMARKMKD, DSEEEIREAFRVFDKDGNGFISAAELRHVMTNLGEK, and LTDEEVDEMIREADIDGDGQVNYEEFVTMMTTK. Residues D21, D23, D25, T27, E32, D57, D59, N61, T63, E68, D94, D96, N98, and E105 each coordinate Ca(2+). The residue at position 116 (K116) is an N6,N6,N6-trimethyllysine. Ca(2+) contacts are provided by D130, D132, D134, Q136, and E141.

Belongs to the calmodulin family. Interacts (in the presence of Ca(2+)) with pde-1, madf-3, rpl-7A, tax-6, efk-1, npp-1, obr-4, sos-1, akt-1, unc-13, tag-196, ugt-48, nmy-2, F27D4.4, ddx-23, efa-6 and R11H6.4.

Its function is as follows. Calmodulin mediates the control of a large number of enzymes, ion channels and other proteins by Ca(2+). Among the enzymes to be stimulated by the calmodulin-Ca(2+) complex are a number of protein kinases and phosphatases. The sequence is that of Calmodulin (cmd-1) from Caenorhabditis elegans.